Here is a 426-residue protein sequence, read N- to C-terminus: Histidine--tRNA ligase (426 aa).

It belongs to the class-II aminoacyl-tRNA synthetase family. In terms of assembly, homodimer.

The protein resides in the cytoplasm. The enzyme catalyses tRNA(His) + L-histidine + ATP = L-histidyl-tRNA(His) + AMP + diphosphate + H(+). The polypeptide is Histidine--tRNA ligase (Pseudoalteromonas translucida (strain TAC 125)).